A 214-amino-acid polypeptide reads, in one-letter code: Ras-related protein RABA2b (214 aa).

19-26 provides a ligand contact to GTP; that stretch reads GDSGVGKS. The Effector region signature appears at 41–49; that stretch reads SKSTIGVEF. GTP is bound by residues 67–71, 125–128, and 155–156; these read DTAGQ, NKSD, and SA. S-geranylgeranyl cysteine attachment occurs at residues cysteine 211 and cysteine 212.

This sequence belongs to the small GTPase superfamily. Rab family. In terms of tissue distribution, expressed in root tips.

It localises to the endosome membrane. The protein resides in the golgi apparatus. Its subcellular location is the trans-Golgi network membrane. In terms of biological role, intracellular vesicle trafficking and protein transport. The polypeptide is Ras-related protein RABA2b (RABA2B) (Arabidopsis thaliana (Mouse-ear cress)).